Here is a 603-residue protein sequence, read N- to C-terminus: Complement factor I (603 aa).

The signal sequence occupies residues 1-18 (MKLAHLSLFLLALHLSSS). 20 cysteine pairs are disulfide-bonded: cysteine 36–cysteine 260, cysteine 46–cysteine 57, cysteine 51–cysteine 62, cysteine 64–cysteine 96, cysteine 70–cysteine 89, cysteine 78–cysteine 109, cysteine 144–cysteine 186, cysteine 157–cysteine 219, cysteine 191–cysteine 201, cysteine 234–cysteine 252, cysteine 246–cysteine 261, cysteine 264–cysteine 276, cysteine 271–cysteine 289, cysteine 283–cysteine 298, cysteine 348–cysteine 473, cysteine 386–cysteine 402, cysteine 394–cysteine 464, cysteine 487–cysteine 551, cysteine 515–cysteine 530, and cysteine 541–cysteine 570. Residues 58–111 (IEGTCICKLPYQCPRAGTPVCAMNGRSYPTYCHQKSFECLHPEIKFSHNGTCAA) form the Kazal-like domain. 4 N-linked (GlcNAc...) asparagine glycosylation sites follow: asparagine 106, asparagine 116, asparagine 174, and asparagine 182. An SRCR domain is found at 117–217 (VSLIYGRTKT…TELSNGLAGV (101 aa)). LDL-receptor class A domains follow at residues 218–262 (VCYK…LCCK) and 263–299 (GCRG…SRCE). Ca(2+) contacts are provided by lysine 244, asparagine 247, valine 249, aspartate 251, aspartate 257, and glutamate 258. Asparagine 267 is a glycosylation site (N-linked (GlcNAc...) asparagine). Residues tyrosine 281, asparagine 284, glutamate 286, aspartate 288, aspartate 294, and glutamate 295 each coordinate Ca(2+). The 234-residue stretch at 361–594 (VIGGKPANVG…YFDWISYHVG (234 aa)) folds into the Peptidase S1 domain. Active-site charge relay system residues include histidine 401 and aspartate 449. N-linked (GlcNAc...) asparagine glycosylation is present at asparagine 514. The active-site Charge relay system is the serine 545. The N-linked (GlcNAc...) asparagine glycan is linked to asparagine 556.

It belongs to the peptidase S1 family. As to quaternary structure, heterodimer of a light and heavy chains; disulfide-linked. The fully processed and mature protein circulates as a zymogen, and is allosterically activated by substrate-induced remodeling of the active site. Interacts with C3b. Interacts with complement factor H. In terms of tissue distribution, expressed in the liver by hepatocytes. Also present in other cells such as monocytes, fibroblasts or keratinocytes.

The protein localises to the secreted. Its subcellular location is the extracellular space. It catalyses the reaction Inactivates complement subcomponents C3b, iC3b and C4b by proteolytic cleavage.. Functionally, trypsin-like serine protease that plays an essential role in regulating the immune response by controlling all complement pathways. Inhibits these pathways by cleaving three peptide bonds in the alpha-chain of C3b and two bonds in the alpha-chain of C4b thereby inactivating these proteins. Essential cofactors for these reactions include factor H and C4BP in the fluid phase and membrane cofactor protein/CD46 and CR1 on cell surfaces. The presence of these cofactors on healthy cells allows degradation of deposited C3b by CFI in order to prevent undesired complement activation, while in apoptotic cells or microbes, the absence of such cofactors leads to C3b-mediated complement activation and subsequent opsonization. The protein is Complement factor I (Cfi) of Mus musculus (Mouse).